The primary structure comprises 244 residues: Probable phosphatase NT01CX_1282 (244 aa).

9 residues coordinate Zn(2+): His8, His10, His16, His41, Glu74, His102, His132, Asp193, and His195.

This sequence belongs to the PHP family. Zn(2+) serves as cofactor.

This Clostridium novyi (strain NT) protein is Probable phosphatase NT01CX_1282.